Here is a 331-residue protein sequence, read N- to C-terminus: Ferredoxin--NADP reductase 2 (331 aa).

Positions 37, 45, 50, 90, 124, 286, and 327 each coordinate FAD.

This sequence belongs to the ferredoxin--NADP reductase type 2 family. Homodimer. FAD serves as cofactor.

It catalyses the reaction 2 reduced [2Fe-2S]-[ferredoxin] + NADP(+) + H(+) = 2 oxidized [2Fe-2S]-[ferredoxin] + NADPH. In Listeria welshimeri serovar 6b (strain ATCC 35897 / DSM 20650 / CCUG 15529 / CIP 8149 / NCTC 11857 / SLCC 5334 / V8), this protein is Ferredoxin--NADP reductase 2.